A 396-amino-acid polypeptide reads, in one-letter code: 1-deoxy-D-xylulose 5-phosphate reductoisomerase (396 aa).

NADPH is bound by residues T15, G16, S17, I18, G41, and N130. K131 serves as a coordination point for 1-deoxy-D-xylulose 5-phosphate. Residue E132 coordinates NADPH. Position 155 (D155) interacts with Mn(2+). 1-deoxy-D-xylulose 5-phosphate contacts are provided by S156, E157, S181, and H204. E157 serves as a coordination point for Mn(2+). An NADPH-binding site is contributed by G210. Residues S217, N222, K223, and E226 each coordinate 1-deoxy-D-xylulose 5-phosphate. E226 provides a ligand contact to Mn(2+).

Belongs to the DXR family. Mg(2+) serves as cofactor. The cofactor is Mn(2+).

The catalysed reaction is 2-C-methyl-D-erythritol 4-phosphate + NADP(+) = 1-deoxy-D-xylulose 5-phosphate + NADPH + H(+). The protein operates within isoprenoid biosynthesis; isopentenyl diphosphate biosynthesis via DXP pathway; isopentenyl diphosphate from 1-deoxy-D-xylulose 5-phosphate: step 1/6. Functionally, catalyzes the NADPH-dependent rearrangement and reduction of 1-deoxy-D-xylulose-5-phosphate (DXP) to 2-C-methyl-D-erythritol 4-phosphate (MEP). This Bifidobacterium longum subsp. infantis (strain ATCC 15697 / DSM 20088 / JCM 1222 / NCTC 11817 / S12) protein is 1-deoxy-D-xylulose 5-phosphate reductoisomerase.